Consider the following 118-residue polypeptide: NTVSSFQDILMRMSKMQLGTSSEDLNGMITQLESLKLYRDSLGEAVMRVGDLHSLQSRNGKWREQLSQKFEEIRWLIEEVRHKLKITENSFEQITFMQALQLLLEVEQEIRTFSFQLI.

2 short sequence motifs (nuclear export signal) span residues 9–18 (ILMRMSKMQL) and 82–91 (HKLKITENSF).

The protein belongs to the influenza viruses NEP family. As to quaternary structure, binds M1 protein. May interact with human nucleoporin RAB/HRB and exportin XPO1/CRM1.

Its subcellular location is the virion. It is found in the host nucleus. Functionally, mediates the nuclear export of encapsidated genomic RNAs (ribonucleoproteins, RNPs). Acts as an adapter between viral RNPs complexes and the nuclear export machinery of the cell. Possesses no intrinsic RNA-binding activity, but includes a C-terminal M1-binding domain. This domain is believed to allow recognition of RNPs to which the M1 protein is bound. Because the M1 protein is not available in large quantities until the later stages of infection, such an indirect recognition mechanism probably ensures that genomic RNPs are not exported from the nucleus before sufficient quantities of viral mRNA and progeny genomic RNA have been synthesized. Furthermore, the RNPs enters the cytoplasm only when they have associated with the M1 protein that is necessary to guide them to the plasma membrane. May down-regulate viral RNA synthesis when overproduced. This Influenza A virus (strain A/Chicken/Japan/1924 H7N7) protein is Nuclear export protein (NS).